The primary structure comprises 983 residues: Alanine--tRNA ligase, mitochondrial (983 aa).

The N-terminal 24 residues, 1–24, are a transit peptide targeting the mitochondrion; it reads MTSTTGLRNLTLSFKKQLTTSTRT. S504 is subject to Phosphoserine. Zn(2+)-binding residues include H625, H629, C744, and H748. At S975 the chain carries Phosphoserine.

Belongs to the class-II aminoacyl-tRNA synthetase family. In terms of assembly, monomer. Zn(2+) serves as cofactor.

It is found in the cytoplasm. The protein resides in the mitochondrion. It catalyses the reaction tRNA(Ala) + L-alanine + ATP = L-alanyl-tRNA(Ala) + AMP + diphosphate. In terms of biological role, catalyzes the attachment of alanine to tRNA(Ala) in a two-step reaction: alanine is first activated by ATP to form Ala-AMP and then transferred to the acceptor end of tRNA(Ala). Also edits incorrectly charged tRNA(Ala) via its editing domain. The chain is Alanine--tRNA ligase, mitochondrial from Saccharomyces cerevisiae (strain ATCC 204508 / S288c) (Baker's yeast).